Consider the following 605-residue polypeptide: Phosphoenolpyruvate carboxykinase (ATP) (605 aa).

The segment covering 27-48 (SGPSSSFINNNNSNNNNNKSSN) has biased composition (low complexity). The interval 27–67 (SGPSSSFINNNNSNNNNNKSSNMFNHDHVNKTNLHPGGVKP) is disordered. 307-314 (GLSGTGKT) serves as a coordination point for ATP.

This sequence belongs to the phosphoenolpyruvate carboxykinase (ATP) family.

The catalysed reaction is oxaloacetate + ATP = phosphoenolpyruvate + ADP + CO2. It participates in carbohydrate biosynthesis; gluconeogenesis. This Neurospora crassa (strain ATCC 24698 / 74-OR23-1A / CBS 708.71 / DSM 1257 / FGSC 987) protein is Phosphoenolpyruvate carboxykinase (ATP) (acu-6).